We begin with the raw amino-acid sequence, 85 residues long: Acylphosphatase (85 aa).

An Acylphosphatase-like domain is found at 3-85; that stretch reads AARFVVSGVV…PARFRRLKTL (83 aa). Catalysis depends on residues arginine 18 and asparagine 36. Positions 66–85 are disordered; it reads PPRSRRSRARPARFRRLKTL.

This sequence belongs to the acylphosphatase family.

The enzyme catalyses an acyl phosphate + H2O = a carboxylate + phosphate + H(+). The sequence is that of Acylphosphatase (acyP) from Xanthomonas axonopodis pv. citri (strain 306).